Here is a 72-residue protein sequence, read N- to C-terminus: Large ribosomal subunit protein bL31c (72 aa).

This sequence belongs to the bacterial ribosomal protein bL31 family. Type A subfamily. As to quaternary structure, part of the 50S ribosomal subunit.

It is found in the plastid. The protein resides in the chloroplast. In terms of biological role, binds the 23S rRNA. The chain is Large ribosomal subunit protein bL31c (rpl31) from Thalassiosira pseudonana (Marine diatom).